Reading from the N-terminus, the 2541-residue chain is Talin-1 (2541 aa).

One can recognise an FERM domain in the interval arginine 86–lysine 403. Threonine 167 carries the phosphothreonine modification. The interval phenylalanine 280 to glutamine 435 is interaction with LAYN. A phosphoserine mark is found at serine 405, serine 425, serine 446, serine 620, and serine 729. The tract at residues arginine 482–isoleucine 655 is helical bundle R1. The segment at glycine 656 to lysine 786 is helical bundle R2. The interval alanine 787 to lysine 911 is helical bundle R3. The interval leucine 913–alanine 1044 is helical bundle R4. Serine 1021 carries the post-translational modification Phosphoserine. Positions glycine 1046 to glutamine 1206 are helical bundle R5. Tyrosine 1116 is modified (phosphotyrosine). Phosphothreonine is present on threonine 1142. 2 positions are modified to phosphoserine: serine 1201 and serine 1225. The tract at residues arginine 1207–alanine 1357 is helical bundle R6. Position 1263 is a phosphothreonine (threonine 1263). At serine 1323 the chain carries Phosphoserine. The interaction with SYNM stretch occupies residues alanine 1327 to lysine 1948. The segment at proline 1358–asparagine 1453 is helical bundle R7A. Residues glycine 1359–leucine 1659 are interaction with VCL and F-actin. The segment at leucine 1461–glutamate 1580 is helical bundle R8. Lysine 1544 is modified (N6-acetyllysine). Positions phenylalanine 1581 to aspartate 1653 are helical bundle R7B. The tract at residues alanine 1655 to glycine 1822 is helical bundle R9. The helical bundle R10 stretch occupies residues valine 1823 to arginine 1973. Residue serine 1849 is modified to Phosphoserine. Threonine 1855 is modified (phosphothreonine). Serine 1878 carries the post-translational modification Phosphoserine. Positions glycine 1974 to threonine 2140 are helical bundle R11. Lysine 2031 carries the N6-acetyllysine modification. Serine 2040 is subject to Phosphoserine. Lysine 2115 is subject to N6-acetyllysine. The interval lysine 2141 to glutamate 2294 is helical bundle R12. Positions threonine 2293–leucine 2533 constitute an I/LWEQ domain. A helical bundle R13 region spans residues aspartate 2300–glutamate 2482.

As to quaternary structure, part of a complex composed of THSD1, PTK2/FAK1, TLN1 and VCL. Interacts with THSD1; this promotes interaction with PTK2/FAK1 and VCL. Binds with high affinity to VCL and with low affinity to integrins. Interacts with APBB1IP; this inhibits VCL binding. Interacts with PTK2/FAK1. Interacts with PIP5K1C and NRAP. Interacts with LAYN. Interacts with SYNM. Interacts with ITGB1; the interaction is prevented by competitive binding of ITGB1BP1. Interacts with SVEP1. Interacts (via R7 domain) with KANK1 or KANK2 (via KN motif); this interaction likely initiates the assembly of cortical microtubule stabilization complexes (CMSCs) at the vicinity of focal adhesions. Interacts with VCL; shows reduced VCL binding compared to isoform 2. Interacts with APBB1IP; shows similar level of binding compared to isoform 2. In terms of assembly, interacts with VCL; shows enhanced VCL binding compared to isoform 1. Interacts with APBB1IP; shows similar level of binding compared to isoform 1. As to quaternary structure, (Microbial infection) Interacts with human cytomegalovirus protein UL135. In terms of tissue distribution, expressed at low to non-detectable levels in many tissues but highly expressed in skin and pancreas with other tissues including kidney cortex, endocervix, testis, pituitary, liver, and spleen also showing robust expression.

It localises to the cell projection. It is found in the ruffle membrane. Its subcellular location is the cytoplasm. The protein resides in the cytoskeleton. The protein localises to the cell surface. It localises to the cell junction. It is found in the focal adhesion. In terms of biological role, high molecular weight cytoskeletal protein concentrated at regions of cell-matrix and cell-cell contacts. Involved in connections of major cytoskeletal structures to the plasma membrane. With KANK1 co-organize the assembly of cortical microtubule stabilizing complexes (CMSCs) positioned to control microtubule-actin crosstalk at focal adhesions (FAs) rims. The chain is Talin-1 (TLN1) from Homo sapiens (Human).